We begin with the raw amino-acid sequence, 94 residues long: Ig kappa-B5 chain V region 2699 (94 aa).

Residues 1–23 are framework-1; it reads AFELTQTPSSVEAAVGGTVTINC. The complementarity-determining-1 stretch occupies residues 24 to 34; the sequence is QASTDISSNLA. The tract at residues 35–49 is framework-2; that stretch reads WYTPKPGSPPKLLIY. The segment at 50–56 is complementarity-determining-2; the sequence is SASTLAS. The segment at 57 to 82 is framework-3; sequence GVSSRFKGSGSGVLITLTISDLECGV. A region of interest (complementarity-determining-3) is located at residue Ser-83. A framework-4 region spans residues 84–93; that stretch reads FGGGTKVVVE.

In Oryctolagus cuniculus (Rabbit), this protein is Ig kappa-B5 chain V region 2699.